A 1567-amino-acid chain; its full sequence is ABC multidrug transporter MDR1 (1567 aa).

Residues 1 to 11 show a composition bias toward pro residues; it reads MASQPPQPPSG. The tract at residues 1 to 37 is disordered; that stretch reads MASQPPQPPSGQPDTQYEEYQSEVITETTNRPTPAAD. Over residues 22–32 the composition is skewed to polar residues; sequence SEVITETTNRP. N-linked (GlcNAc...) asparagine glycosylation is found at Asn149, Asn157, and Asn356. The 266-residue stretch at 167–432 folds into the ABC transporter 1 domain; sequence VQYQDTFLSP…FEEMGWYCPP (266 aa). Transmembrane regions (helical) follow at residues 543 to 563, 571 to 591, 636 to 656, 661 to 681, 691 to 711, and 798 to 818; these read STIATNISQIMMALIIGSLFF, GFFAKGSVIFFAILLNGLMSI, IPIKFLLALVFNIIIYFLGGL, AKFFIFFLFTFITILTMSAIF, IPQALALAGVMILALVIYTGF, and LGILLGFLAFFYFVYLVVSEL. Asn819, Asn895, and Asn912 each carry an N-linked (GlcNAc...) asparagine glycan. Positions 891–1134 constitute an ABC transporter 2 domain; that stretch reads FTWRNVTYDI…LLNYFETHGA (244 aa). Position 927-934 (927-934) interacts with ATP; it reads GVSGAGKT. The disordered stretch occupies residues 1172-1202; it reads ESRHVQQELDRIQSETSKRNEGHGQSAEKEP. Residues 1231–1251 form a helical membrane-spanning segment; it reads IWGKLLLGLTSALFIGFSFFL. Asn1253 carries N-linked (GlcNAc...) asparagine glycosylation. Transmembrane regions (helical) follow at residues 1257–1277, 1305–1325, 1345–1365, 1372–1392, and 1498–1518; these read AGLQNSLFSIFMLTTIFSSLV, VFLLANIIVEIPYQILLGIIA, ILLLYCVQFFIFASTFAQMII, ETAGGIATTMFGLMVTFNGVL, and GIGWAYIVFNIFATVALYYLI.

It belongs to the ABC transporter superfamily. ABCG family. PDR (TC 3.A.1.205) subfamily.

It localises to the cell membrane. The enzyme catalyses voriconazole(in) + ATP + H2O = voriconazole(out) + ADP + phosphate + H(+). It catalyses the reaction fluconazole(in) + ATP + H2O = fluconazole(out) + ADP + phosphate + H(+). It carries out the reaction (R)-miconazole(in) + ATP + H2O = (R)-miconazole(out) + ADP + phosphate + H(+). The catalysed reaction is (S)-miconazole(in) + ATP + H2O = (S)-miconazole(out) + ADP + phosphate + H(+). Pleiotropic ABC efflux transporter that may be involved in the modulation susceptibility to a wide range of unrelated cytotoxic compounds. This is ABC multidrug transporter MDR1 from Trichophyton tonsurans (strain CBS 112818) (Scalp ringworm fungus).